A 244-amino-acid chain; its full sequence is tRNA pseudouridine synthase A (244 aa).

Catalysis depends on Asp52, which acts as the Nucleophile. A substrate-binding site is contributed by Tyr110.

This sequence belongs to the tRNA pseudouridine synthase TruA family. In terms of assembly, homodimer.

It carries out the reaction uridine(38/39/40) in tRNA = pseudouridine(38/39/40) in tRNA. Formation of pseudouridine at positions 38, 39 and 40 in the anticodon stem and loop of transfer RNAs. This Pelobacter propionicus (strain DSM 2379 / NBRC 103807 / OttBd1) protein is tRNA pseudouridine synthase A.